The primary structure comprises 381 residues: Alanine racemase, catabolic (381 aa).

Catalysis depends on Lys-55, which acts as the Proton acceptor; specific for D-alanine. N6-(pyridoxal phosphate)lysine is present on Lys-55. Arg-154 lines the substrate pocket. The Proton acceptor; specific for L-alanine role is filled by Tyr-276. Met-322 lines the substrate pocket.

This sequence belongs to the alanine racemase family. Pyridoxal 5'-phosphate is required as a cofactor.

The catalysed reaction is L-alanine = D-alanine. Isomerizes L-alanine to D-alanine which is then oxidized to pyruvate by DadA. In Mesorhizobium japonicum (strain LMG 29417 / CECT 9101 / MAFF 303099) (Mesorhizobium loti (strain MAFF 303099)), this protein is Alanine racemase, catabolic (dadB).